A 322-amino-acid chain; its full sequence is Protein lin-56 (322 aa).

The disordered stretch occupies residues serine 264–alanine 322. Residues glutamate 275–tyrosine 304 are compositionally biased toward basic and acidic residues.

As to expression, widely expressed throughout embryonic development. Expressed in the six multipotent ventral ectodermal blast cells, P3.p-P8.p, which generate the vulva and in their descendants throughout vulval development.

Its subcellular location is the nucleus. Its function is as follows. Required for translation, stability and/or localization of lin-15a. This is Protein lin-56 (lin-56) from Caenorhabditis elegans.